Consider the following 126-residue polypeptide: Glycine cleavage system H protein (126 aa).

The region spanning 22–104 (VATIGITEYA…YEKAWMVKVE (83 aa)) is the Lipoyl-binding domain. Position 63 is an N6-lipoyllysine (lysine 63).

This sequence belongs to the GcvH family. In terms of assembly, the glycine cleavage system is composed of four proteins: P, T, L and H. (R)-lipoate is required as a cofactor.

Functionally, the glycine cleavage system catalyzes the degradation of glycine. The H protein shuttles the methylamine group of glycine from the P protein to the T protein. In terms of biological role, is also involved in protein lipoylation via its role as an octanoyl/lipoyl carrier protein intermediate. The protein is Glycine cleavage system H protein of Staphylococcus aureus (strain JH1).